The chain runs to 268 residues: ClpXP adapter protein SpxH (268 aa).

It belongs to the SpxH family. As to quaternary structure, interacts with Spx.

The protein resides in the cytoplasm. Its function is as follows. Adapter protein required for efficient degradation of Spx by ClpXP under non-stress conditions. Interaction with Spx stabilizes Spx and exposes the C-terminus of Spx for recognition and proteolysis by ClpXP. The protein is ClpXP adapter protein SpxH of Staphylococcus aureus (strain Mu3 / ATCC 700698).